The sequence spans 312 residues: Serpentine receptor class gamma-31 (312 aa).

Helical transmembrane passes span 6 to 26 (LITQ…TVVF), 38 to 58 (FLKL…NFYI), 92 to 112 (FIFC…LTSI), 132 to 152 (TYIL…PLLV), 180 to 200 (FILV…IICW), 218 to 238 (LFLV…IAML), and 259 to 279 (LLSP…LIIF).

It belongs to the nematode receptor-like protein srg family.

Its subcellular location is the membrane. This chain is Serpentine receptor class gamma-31 (srg-31), found in Caenorhabditis elegans.